Here is a 191-residue protein sequence, read N- to C-terminus: Ion-translocating oxidoreductase complex subunit B (191 aa).

Residues Met1–Ser26 form a hydrophobic region. The 4Fe-4S domain maps to Glu32 to Val91. [4Fe-4S] cluster-binding residues include Cys49, Cys52, Cys57, Cys74, Cys116, Cys119, Cys122, Cys126, Cys146, Cys149, Cys152, and Cys156. 2 consecutive 4Fe-4S ferredoxin-type domains span residues Lys107–Arg136 and Ala137–Val166.

It belongs to the 4Fe4S bacterial-type ferredoxin family. RnfB subfamily. As to quaternary structure, the complex is composed of six subunits: RnfA, RnfB, RnfC, RnfD, RnfE and RnfG. It depends on [4Fe-4S] cluster as a cofactor.

Its subcellular location is the cell inner membrane. In terms of biological role, part of a membrane-bound complex that couples electron transfer with translocation of ions across the membrane. In Erwinia tasmaniensis (strain DSM 17950 / CFBP 7177 / CIP 109463 / NCPPB 4357 / Et1/99), this protein is Ion-translocating oxidoreductase complex subunit B.